A 224-amino-acid polypeptide reads, in one-letter code: Large ribosomal subunit protein uL3 (224 aa).

At Gln159 the chain carries N5-methylglutamine.

This sequence belongs to the universal ribosomal protein uL3 family. As to quaternary structure, part of the 50S ribosomal subunit. Forms a cluster with proteins L14 and L19. In terms of processing, methylated by PrmB.

In terms of biological role, one of the primary rRNA binding proteins, it binds directly near the 3'-end of the 23S rRNA, where it nucleates assembly of the 50S subunit. This chain is Large ribosomal subunit protein uL3, found in Herminiimonas arsenicoxydans.